Here is a 410-residue protein sequence, read N- to C-terminus: Beta-arrestin-2 (410 aa).

A Phosphotyrosine modification is found at tyrosine 48. Proline 176 and proline 181 each carry hydroxyproline; by PHD2. Positions 241-410 are interaction with TRAF6; the sequence is ADICLFSTAQ…KDDDCDDQFC (170 aa). Serine 361 is subject to Phosphoserine. The interval 364-410 is interaction with AP2B1; the sequence is RETDVPVDTNLIEFDTNYATDDDIVFEDFARLRLKGMKDDDCDDQFC. The residue at position 383 (threonine 383) is a Phosphothreonine. Positions 386–396 match the [DE]-X(1,2)-F-X-X-[FL]-X-X-X-R motif motif; that stretch reads DIVFEDFARLR.

It belongs to the arrestin family. Homooligomer; the self-association is mediated by InsP6-binding. Heterooligomer with ARRB1; the association is mediated by InsP6-binding. Interacts with ADRB2 and CHRM2. Interacts with PDE4A. Interacts with PDE4D. Interacts with MAPK10, MAPK1 and MAPK3. Interacts with DRD2. Interacts with FSHR. Interacts with CLTC. Interacts with HTR2C. Interacts with CCR5. Interacts with CXCR4. Interacts with SRC. Interacts with DUSP16; the interaction is interrupted by stimulation of AGTR1 and activation of MAPK10. Interacts with CHUK; the interaction is enhanced stimulation of ADRB2. Interacts with RELA. Interacts with MDM2; the interaction is enhanced by activation of GPCRs. Interacts with SLC9A5. Interacts with TRAF6. Interacts with IGF1R. Interacts with ENG. Interacts with ARRB2. Interacts with KIR2DL1, KIR2DL3 and KIR2DL4. Interacts with LDLR. Interacts with AP2B1. Interacts with C5AR1. Interacts with RAF1. Interacts with MAP2K1. Interacts with MAPK1. Interacts with MAPK10; the interaction enhances MAPK10 activation by MAP3K5. Interacts with MAP2K4; the interaction is enhanced by presence of MAP3K5 and MAPK10. Interacts with MAP3K5. Interacts with AKT1. Interacts with IKBKB and MAP3K14. Interacts with SMO (activated). Interacts with GSK3A and GSK3B. Interacts with CXCR4; the interaction is dependent on C-terminal phosphorylation of CXCR4 and allows activation of MAPK1 and MAPK3. Interacts with GPR143. Interacts with HCK and CXCR1 (phosphorylated). Associates with protein phosphatase 2A (PP2A). Interacts with ACKR3 and ACKR4. Interacts with ARRDC1; the interaction is direct. Interacts with GPR61, GPR62 and GPR135. Interacts (via NACHT and LRR domains) with NLRP3; this interaction is direct and inducible by omega-3 polyunsaturated fatty acids (PUFAs). Interacts with FFAR4 (via C-terminus); this interaction is stimulated by long-chain fatty acids (LCFAs). Interacts with GPR35. Interacts with GPR84. Interacts with TIGIT; this interaction inhibits the NF-kappa-B pathway. Interacts with TGFBR3. Phosphorylated at Thr-383 in the cytoplasm; probably dephosphorylated at the plasma membrane. The phosphorylation does not regulate internalization and recycling of ADRB2, interaction with clathrin or AP2B1. Post-translationally, the ubiquitination status appears to regulate the formation and trafficking of beta-arrestin-GPCR complexes and signaling. Ubiquitination appears to occur GPCR-specific. Ubiquitinated by MDM2; the ubiquitination is required for rapid internalization of ADRB2. Deubiquitinated by USP33; the deubiquitination leads to a dissociation of the beta-arrestin-GPCR complex. Stimulation of a class A GPCR, such as ADRB2, induces transient ubiquitination and subsequently promotes association with USP33. Stimulation of a class B GPCR promotes a sustained ubiquitination. Deubiquitinated by USP20; allowing USP20 to deubiquitinate TRAF6 leading to inhibition of NF-kappa-B signaling. In terms of processing, hydroxylation by PHD2 modulates the rate of internalization by slowing down recruitment to the plasma membrane and inhibiting subsequent co-internalization with class A receptors. In terms of tissue distribution, predominantly localized in neuronal tissues and in the spleen.

Its subcellular location is the cytoplasm. It localises to the nucleus. The protein resides in the cell membrane. The protein localises to the membrane. It is found in the clathrin-coated pit. Its subcellular location is the cytoplasmic vesicle. Its function is as follows. Functions in regulating agonist-mediated G-protein coupled receptor (GPCR) signaling by mediating both receptor desensitization and resensitization processes. During homologous desensitization, beta-arrestins bind to the GPRK-phosphorylated receptor and sterically preclude its coupling to the cognate G-protein; the binding appears to require additional receptor determinants exposed only in the active receptor conformation. The beta-arrestins target many receptors for internalization by acting as endocytic adapters (CLASPs, clathrin-associated sorting proteins) and recruiting the GPRCs to the adapter protein 2 complex 2 (AP-2) in clathrin-coated pits (CCPs). However, the extent of beta-arrestin involvement appears to vary significantly depending on the receptor, agonist and cell type. Internalized arrestin-receptor complexes traffic to intracellular endosomes, where they remain uncoupled from G-proteins. Two different modes of arrestin-mediated internalization occur. Class A receptors, like ADRB2, OPRM1, ENDRA, D1AR and ADRA1B dissociate from beta-arrestin at or near the plasma membrane and undergo rapid recycling. Class B receptors, like AVPR2, AGTR1, NTSR1, TRHR and TACR1 internalize as a complex with arrestin and traffic with it to endosomal vesicles, presumably as desensitized receptors, for extended periods of time. Receptor resensitization then requires that receptor-bound arrestin is removed so that the receptor can be dephosphorylated and returned to the plasma membrane. Mediates endocytosis of CCR7 following ligation of CCL19 but not CCL21. Involved in internalization of P2RY1, P2RY4, P2RY6 and P2RY11 and ATP-stimulated internalization of P2RY2. Involved in phosphorylation-dependent internalization of OPRD1 and subsequent recycling or degradation. Involved in ubiquitination of IGF1R. Beta-arrestins function as multivalent adapter proteins that can switch the GPCR from a G-protein signaling mode that transmits short-lived signals from the plasma membrane via small molecule second messengers and ion channels to a beta-arrestin signaling mode that transmits a distinct set of signals that are initiated as the receptor internalizes and transits the intracellular compartment. Acts as a signaling scaffold for MAPK pathways such as MAPK1/3 (ERK1/2) and MAPK10 (JNK3). ERK1/2 and JNK3 activated by the beta-arrestin scaffold are largely excluded from the nucleus and confined to cytoplasmic locations such as endocytic vesicles, also called beta-arrestin signalosomes. Acts as a signaling scaffold for the AKT1 pathway. GPCRs for which the beta-arrestin-mediated signaling relies on both ARRB1 and ARRB2 (codependent regulation) include ADRB2, F2RL1 and PTH1R. For some GPCRs the beta-arrestin-mediated signaling relies on either ARRB1 or ARRB2 and is inhibited by the other respective beta-arrestin form (reciprocal regulation). Increases ERK1/2 signaling in AGTR1- and AVPR2-mediated activation (reciprocal regulation). Involved in CCR7-mediated ERK1/2 signaling involving ligand CCL19. Is involved in type-1A angiotensin II receptor/AGTR1-mediated ERK activity. Is involved in type-1A angiotensin II receptor/AGTR1-mediated MAPK10 activity. Is involved in dopamine-stimulated AKT1 activity in the striatum by disrupting the association of AKT1 with its negative regulator PP2A. Involved in AGTR1-mediated chemotaxis. Appears to function as signaling scaffold involved in regulation of MIP-1-beta-stimulated CCR5-dependent chemotaxis. Involved in attenuation of NF-kappa-B-dependent transcription in response to GPCR or cytokine stimulation by interacting with and stabilizing CHUK. Suppresses UV-induced NF-kappa-B-dependent activation by interacting with CHUK. The function is promoted by stimulation of ADRB2 and dephosphorylation of ARRB2. Involved in IL8-mediated granule release in neutrophils. Involved in p53/TP53-mediated apoptosis by regulating MDM2 and reducing the MDM2-mediated degradation of p53/TP53. May serve as nuclear messenger for GPCRs. Upon stimulation of OR1D2, may be involved in regulation of gene expression during the early processes of fertilization. Also involved in regulation of receptors other than GPCRs. Involved in endocytosis of TGFBR2 and TGFBR3 and down-regulates TGF-beta signaling such as NF-kappa-B activation. Involved in endocytosis of low-density lipoprotein receptor/LDLR. Involved in endocytosis of smoothened homolog/Smo, which also requires GRK2. Involved in endocytosis of SLC9A5. Involved in endocytosis of ENG and subsequent TGF-beta-mediated ERK activation and migration of epithelial cells. Involved in Toll-like receptor and IL-1 receptor signaling through the interaction with TRAF6 which prevents TRAF6 autoubiquitination and oligomerization required for activation of NF-kappa-B and JUN. Involved in insulin resistance by acting as insulin-induced signaling scaffold for SRC, AKT1 and INSR. Involved in regulation of inhibitory signaling of natural killer cells by recruiting PTPN6 and PTPN11 to KIR2DL1. Involved in the internalization of the atypical chemokine receptor ACKR3. Acts as an adapter protein coupling FFAR4 receptor to specific downstream signaling pathways, as well as mediating receptor endocytosis. During the activation step of NLRP3 inflammasome, directly associates with NLRP3 leading to inhibition of pro-inflammatory cytokine release and inhibition of inflammation. The polypeptide is Beta-arrestin-2 (Arrb2) (Mus musculus (Mouse)).